The chain runs to 443 residues: Tol-Pal system protein TolB (443 aa).

The first 33 residues, 1-33 (MKIGIINTKIRTVFSAFACMIAASLVCTMPARA), serve as a signal peptide directing secretion.

Belongs to the TolB family. The Tol-Pal system is composed of five core proteins: the inner membrane proteins TolA, TolQ and TolR, the periplasmic protein TolB and the outer membrane protein Pal. They form a network linking the inner and outer membranes and the peptidoglycan layer.

The protein resides in the periplasm. Functionally, part of the Tol-Pal system, which plays a role in outer membrane invagination during cell division and is important for maintaining outer membrane integrity. The protein is Tol-Pal system protein TolB of Brucella melitensis biotype 1 (strain ATCC 23456 / CCUG 17765 / NCTC 10094 / 16M).